The primary structure comprises 294 residues: Phosphatidylserine decarboxylase proenzyme (294 aa).

Active-site charge relay system; for autoendoproteolytic cleavage activity residues include Asp113, His169, and Ser256. Ser256 serves as the catalytic Schiff-base intermediate with substrate; via pyruvic acid; for decarboxylase activity. Ser256 carries the pyruvic acid (Ser); by autocatalysis modification.

Belongs to the phosphatidylserine decarboxylase family. PSD-B subfamily. Prokaryotic type II sub-subfamily. Heterodimer of a large membrane-associated beta subunit and a small pyruvoyl-containing alpha subunit. Pyruvate serves as cofactor. In terms of processing, is synthesized initially as an inactive proenzyme. Formation of the active enzyme involves a self-maturation process in which the active site pyruvoyl group is generated from an internal serine residue via an autocatalytic post-translational modification. Two non-identical subunits are generated from the proenzyme in this reaction, and the pyruvate is formed at the N-terminus of the alpha chain, which is derived from the carboxyl end of the proenzyme. The autoendoproteolytic cleavage occurs by a canonical serine protease mechanism, in which the side chain hydroxyl group of the serine supplies its oxygen atom to form the C-terminus of the beta chain, while the remainder of the serine residue undergoes an oxidative deamination to produce ammonia and the pyruvoyl prosthetic group on the alpha chain. During this reaction, the Ser that is part of the protease active site of the proenzyme becomes the pyruvoyl prosthetic group, which constitutes an essential element of the active site of the mature decarboxylase.

The protein localises to the cell membrane. It carries out the reaction a 1,2-diacyl-sn-glycero-3-phospho-L-serine + H(+) = a 1,2-diacyl-sn-glycero-3-phosphoethanolamine + CO2. It participates in phospholipid metabolism; phosphatidylethanolamine biosynthesis; phosphatidylethanolamine from CDP-diacylglycerol: step 2/2. Functionally, catalyzes the formation of phosphatidylethanolamine (PtdEtn) from phosphatidylserine (PtdSer). This chain is Phosphatidylserine decarboxylase proenzyme, found in Clostridium perfringens (strain ATCC 13124 / DSM 756 / JCM 1290 / NCIMB 6125 / NCTC 8237 / Type A).